The chain runs to 507 residues: Arylsulfatase A (507 aa).

The N-terminal stretch at methionine 1–alanine 18 is a signal peptide. Aspartate 29, aspartate 30, and cysteine 69 together coordinate Ca(2+). The active-site Nucleophile is cysteine 69. A 3-oxoalanine (Cys) modification is found at cysteine 69. Residue lysine 123 coordinates substrate. Histidine 125 is a catalytic residue. Substrate is bound at residue serine 150. 2 disulfides stabilise this stretch: cysteine 156/cysteine 172 and cysteine 161/cysteine 168. N-linked (GlcNAc...) asparagine glycosylation occurs at asparagine 158. The N-linked (GlcNAc...) asparagine glycan is linked to asparagine 184. Residue histidine 229 coordinates substrate. The Ca(2+) site is built by aspartate 281 and asparagine 282. 4 disulfides stabilise this stretch: cysteine 300/cysteine 414, cysteine 488/cysteine 500, cysteine 489/cysteine 502, and cysteine 493/cysteine 499. A substrate-binding site is contributed by lysine 302. N-linked (GlcNAc...) asparagine glycosylation is present at asparagine 350.

Belongs to the sulfatase family. In terms of assembly, homodimer at neutral pH and homooctamer at acidic pH. Exists both as a single chain of 58 kDa (component A) or as a chain of 50 kDa (component B) linked by disulfide bond(s) to a 7 kDa chain (component C). Interacts with SUMF1. Ca(2+) is required as a cofactor. In terms of processing, the conversion to 3-oxoalanine (also known as C-formylglycine, FGly), of a serine or cysteine residue in prokaryotes and of a cysteine residue in eukaryotes, is critical for catalytic activity. This post-translational modification is severely defective in multiple sulfatase deficiency (MSD).

Its subcellular location is the endoplasmic reticulum. It localises to the lysosome. It catalyses the reaction an N-acyl-1-beta-D-(3-O-sulfo)-galactosyl-sphing-4-enine + H2O = a beta-D-galactosyl-(1&lt;-&gt;1')-N-acylsphing-4-enine + sulfate + H(+). Hydrolyzes cerebroside sulfate. The chain is Arylsulfatase A (ARSA) from Bos taurus (Bovine).